Reading from the N-terminus, the 323-residue chain is Aspartate carbamoyltransferase catalytic subunit (323 aa).

Carbamoyl phosphate is bound by residues Arg-61 and Thr-62. Lys-89 is an L-aspartate binding site. Residues Arg-111, His-144, and Gln-147 each contribute to the carbamoyl phosphate site. L-aspartate contacts are provided by Arg-184 and Arg-238. Gly-279 and Pro-280 together coordinate carbamoyl phosphate.

It belongs to the aspartate/ornithine carbamoyltransferase superfamily. ATCase family. As to quaternary structure, heterododecamer (2C3:3R2) of six catalytic PyrB chains organized as two trimers (C3), and six regulatory PyrI chains organized as three dimers (R2).

It carries out the reaction carbamoyl phosphate + L-aspartate = N-carbamoyl-L-aspartate + phosphate + H(+). It functions in the pathway pyrimidine metabolism; UMP biosynthesis via de novo pathway; (S)-dihydroorotate from bicarbonate: step 2/3. Its function is as follows. Catalyzes the condensation of carbamoyl phosphate and aspartate to form carbamoyl aspartate and inorganic phosphate, the committed step in the de novo pyrimidine nucleotide biosynthesis pathway. The chain is Aspartate carbamoyltransferase catalytic subunit from Acaryochloris marina (strain MBIC 11017).